Reading from the N-terminus, the 145-residue chain is D-aminoacyl-tRNA deacylase (145 aa).

Positions 137-138 (GP) match the Gly-cisPro motif, important for rejection of L-amino acids motif.

Belongs to the DTD family. In terms of assembly, homodimer.

The protein localises to the cytoplasm. It catalyses the reaction glycyl-tRNA(Ala) + H2O = tRNA(Ala) + glycine + H(+). It carries out the reaction a D-aminoacyl-tRNA + H2O = a tRNA + a D-alpha-amino acid + H(+). In terms of biological role, an aminoacyl-tRNA editing enzyme that deacylates mischarged D-aminoacyl-tRNAs. Also deacylates mischarged glycyl-tRNA(Ala), protecting cells against glycine mischarging by AlaRS. Acts via tRNA-based rather than protein-based catalysis; rejects L-amino acids rather than detecting D-amino acids in the active site. By recycling D-aminoacyl-tRNA to D-amino acids and free tRNA molecules, this enzyme counteracts the toxicity associated with the formation of D-aminoacyl-tRNA entities in vivo and helps enforce protein L-homochirality. The chain is D-aminoacyl-tRNA deacylase from Citrobacter koseri (strain ATCC BAA-895 / CDC 4225-83 / SGSC4696).